A 524-amino-acid polypeptide reads, in one-letter code: Nickel-binding periplasmic protein (524 aa).

The signal sequence occupies residues 1 to 22 (MLSTLRRTLFALLACASFIVHA).

It belongs to the bacterial solute-binding protein 5 family.

The protein resides in the periplasm. Its function is as follows. Involved in a nickel transport system, probably represents the nickel binder. The chain is Nickel-binding periplasmic protein (nikA) from Escherichia coli (strain K12).